We begin with the raw amino-acid sequence, 286 residues long: uncharacterized protein (286 aa).

The interval 152-182 is disordered; that stretch reads YPSTTTSVTPGKKGEKTTKVDGFSSPLNQDT. A helical membrane pass occupies residues 198-218; the sequence is VLIAVTLFVSGIAITVFVIFE. Residues 239 to 278 form a disordered region; it reads RRPRKEDQQPGTAESQSDTQPKKVGQEAPNSSSPKKAVEI. The segment covering 247–257 has biased composition (polar residues); it reads QPGTAESQSDT.

Its subcellular location is the membrane. This is an uncharacterized protein from Bos taurus (Bovine).